Consider the following 364-residue polypeptide: Aminomethyltransferase (364 aa).

Belongs to the GcvT family. The glycine cleavage system is composed of four proteins: P, T, L and H.

The enzyme catalyses N(6)-[(R)-S(8)-aminomethyldihydrolipoyl]-L-lysyl-[protein] + (6S)-5,6,7,8-tetrahydrofolate = N(6)-[(R)-dihydrolipoyl]-L-lysyl-[protein] + (6R)-5,10-methylene-5,6,7,8-tetrahydrofolate + NH4(+). The glycine cleavage system catalyzes the degradation of glycine. The chain is Aminomethyltransferase from Salmonella paratyphi C (strain RKS4594).